The sequence spans 84 residues: MYB-like transcription factor TCL1 (84 aa).

A Myb-like domain is found at 36–73 (TEQEEDLIFRMYRLVGDRWDLIARRVVGREAKEIERYW).

In terms of tissue distribution, expressed in inflorescences and trichomes of rosette and cauline leaves.

Its subcellular location is the nucleus. Its function is as follows. MYB-type transcription factor involved in trichome cell specification. Acts as a negative regulator of trichome patterning and formation by direct binding to the cis-acting regulatory elements of GL1, thus suppressing the expression of GL1. The protein is MYB-like transcription factor TCL1 (TCL1) of Arabidopsis thaliana (Mouse-ear cress).